We begin with the raw amino-acid sequence, 501 residues long: ATP synthase subunit alpha (501 aa).

169-176 is a binding site for ATP; sequence GDRQTGKT.

This sequence belongs to the ATPase alpha/beta chains family. In terms of assembly, F-type ATPases have 2 components, CF(1) - the catalytic core - and CF(0) - the membrane proton channel. CF(1) has five subunits: alpha(3), beta(3), gamma(1), delta(1), epsilon(1). CF(0) has three main subunits: a(1), b(2) and c(9-12). The alpha and beta chains form an alternating ring which encloses part of the gamma chain. CF(1) is attached to CF(0) by a central stalk formed by the gamma and epsilon chains, while a peripheral stalk is formed by the delta and b chains.

The protein resides in the cell inner membrane. It carries out the reaction ATP + H2O + 4 H(+)(in) = ADP + phosphate + 5 H(+)(out). Functionally, produces ATP from ADP in the presence of a proton gradient across the membrane. The alpha chain is a regulatory subunit. The polypeptide is ATP synthase subunit alpha (Campylobacter jejuni subsp. jejuni serotype O:6 (strain 81116 / NCTC 11828)).